We begin with the raw amino-acid sequence, 191 residues long: Large ribosomal subunit protein uL6B (191 aa).

It belongs to the universal ribosomal protein uL6 family. As to quaternary structure, component of the large ribosomal subunit (LSU). Mature yeast ribosomes consist of a small (40S) and a large (60S) subunit. The 40S small subunit contains 1 molecule of ribosomal RNA (18S rRNA) and 33 different proteins (encoded by 57 genes). The large 60S subunit contains 3 rRNA molecules (25S, 5.8S and 5S rRNA) and 46 different proteins (encoded by 81 genes).

The protein localises to the cytoplasm. Component of the ribosome, a large ribonucleoprotein complex responsible for the synthesis of proteins in the cell. The small ribosomal subunit (SSU) binds messenger RNAs (mRNAs) and translates the encoded message by selecting cognate aminoacyl-transfer RNA (tRNA) molecules. The large subunit (LSU) contains the ribosomal catalytic site termed the peptidyl transferase center (PTC), which catalyzes the formation of peptide bonds, thereby polymerizing the amino acids delivered by tRNAs into a polypeptide chain. The nascent polypeptides leave the ribosome through a tunnel in the LSU and interact with protein factors that function in enzymatic processing, targeting, and the membrane insertion of nascent chains at the exit of the ribosomal tunnel. This chain is Large ribosomal subunit protein uL6B, found in Saccharomyces cerevisiae (strain ATCC 204508 / S288c) (Baker's yeast).